Consider the following 398-residue polypeptide: Isopenicillin N epimerase (398 aa).

Lys-219 is subject to N6-(pyridoxal phosphate)lysine. The segment at 243–264 (PQVSWGYRPDGENPSDERNRFG) is disordered. Basic and acidic residues predominate over residues 251–264 (PDGENPSDERNRFG).

It belongs to the class-V pyridoxal-phosphate-dependent aminotransferase family. Pyridoxal 5'-phosphate serves as cofactor.

It carries out the reaction isopenicillin N = penicillin N. The protein operates within antibiotic biosynthesis; cephalosporin C biosynthesis. Catalyzes the reversible isomerization between isopenicillin N and penicillin N. The chain is Isopenicillin N epimerase (cefD) from Amycolatopsis lactamdurans (Nocardia lactamdurans).